The following is a 690-amino-acid chain: Proprotein convertase subtilisin/kexin type 9 (690 aa).

Positions 1-28 (MGTVSSRRLWWPLPLLLLLLLGPTGTRA) are cleaved as a signal peptide. Residues 29–150 (QEEDDDDYEE…IEEDSSVFAQ (122 aa)) constitute a propeptide that is removed on maturation. A Sulfotyrosine modification is found at Y36. A Phosphoserine modification is found at S45. Residues 75–147 (TYVVVLKEET…VDYIEEDSSV (73 aa)) enclose the Inhibitor I9 domain. Residues 153–459 (PWNLERITPA…GWQLFCRTVW (307 aa)) enclose the Peptidase S8 domain. Active-site charge relay system residues include D184 and H224. Cystine bridges form between C221/C253 and C321/C356. Catalysis depends on S384, which acts as the Charge relay system. Positions 448–690 (GAGWQLFCRT…HLAQASQELQ (243 aa)) are C-terminal domain. Disulfide bonds link C455–C525, C475–C524, and C484–C507. N531 carries N-linked (GlcNAc...) asparagine glycosylation. 6 cysteine pairs are disulfide-bonded: C532–C599, C550–C598, C560–C586, C606–C677, C624–C676, and C633–C652. S686 bears the Phosphoserine mark.

The protein belongs to the peptidase S8 family. In terms of assembly, monomer. Can self-associate to form dimers and higher multimers which may have increased LDLR degrading activity. The precursor protein but not the mature protein may form multimers. Interacts with APOB, VLDLR, LRP8/APOER2 and BACE1. The full-length immature form (pro-PCSK9) interacts with SCNN1A, SCNN1B and SCNN1G. The pro-PCSK9 form (via C-terminal domain) interacts with LDLR. Interacts (via the C-terminal domain) with ANXA2 (via repeat Annexin 1); the interaction inhibits the degradation of LDLR. It depends on Ca(2+) as a cofactor. Post-translationally, cleavage by furin and PCSK5 generates a truncated inactive protein that is unable to induce LDLR degradation. Undergoes autocatalytic cleavage in the endoplasmic reticulum to release the propeptide from the N-terminus and the cleavage of the propeptide is strictly required for its maturation and activation. The cleaved propeptide however remains associated with the catalytic domain through non-covalent interactions, preventing potential substrates from accessing its active site. As a result, it is secreted from cells as a propeptide-containing, enzymatically inactive protein. In terms of processing, phosphorylation protects the propeptide against proteolysis.

It is found in the cytoplasm. The protein resides in the secreted. Its subcellular location is the endosome. The protein localises to the lysosome. It localises to the cell surface. It is found in the endoplasmic reticulum. The protein resides in the golgi apparatus. With respect to regulation, its proteolytic activity is autoinhibited by the non-covalent binding of the propeptide to the catalytic domain. Inhibited by EGTA. In terms of biological role, crucial player in the regulation of plasma cholesterol homeostasis. Binds to low-density lipid receptor family members: low density lipoprotein receptor (LDLR), very low density lipoprotein receptor (VLDLR), apolipoprotein E receptor (LRP1/APOER) and apolipoprotein receptor 2 (LRP8/APOER2), and promotes their degradation in intracellular acidic compartments. Acts via a non-proteolytic mechanism to enhance the degradation of the hepatic LDLR through a clathrin LDLRAP1/ARH-mediated pathway. May prevent the recycling of LDLR from endosomes to the cell surface or direct it to lysosomes for degradation. Can induce ubiquitination of LDLR leading to its subsequent degradation. Inhibits intracellular degradation of APOB via the autophagosome/lysosome pathway in a LDLR-independent manner. Involved in the disposal of non-acetylated intermediates of BACE1 in the early secretory pathway. Inhibits epithelial Na(+) channel (ENaC)-mediated Na(+) absorption by reducing ENaC surface expression primarily by increasing its proteasomal degradation. Regulates neuronal apoptosis via modulation of LRP8/APOER2 levels and related anti-apoptotic signaling pathways. This chain is Proprotein convertase subtilisin/kexin type 9 (PCSK9), found in Callithrix jacchus (White-tufted-ear marmoset).